The sequence spans 903 residues: DNA gyrase subunit A (903 aa).

One can recognise a Topo IIA-type catalytic domain in the interval 36 to 499 (LPDARDGFKP…AIDDSDDEDL (464 aa)). Catalysis depends on Tyr-124, which acts as the O-(5'-phospho-DNA)-tyrosine intermediate. Positions 526-532 (QNRGGKG) match the GyrA-box motif. Residues 881–895 (VDDDSVVKDDAEKQE) show a composition bias toward basic and acidic residues. The tract at residues 881 to 903 (VDDDSVVKDDAEKQEIGPTETEE) is disordered.

It belongs to the type II topoisomerase GyrA/ParC subunit family. As to quaternary structure, heterotetramer, composed of two GyrA and two GyrB chains. In the heterotetramer, GyrA contains the active site tyrosine that forms a transient covalent intermediate with DNA, while GyrB binds cofactors and catalyzes ATP hydrolysis.

It localises to the cytoplasm. The enzyme catalyses ATP-dependent breakage, passage and rejoining of double-stranded DNA.. Its function is as follows. A type II topoisomerase that negatively supercoils closed circular double-stranded (ds) DNA in an ATP-dependent manner to modulate DNA topology and maintain chromosomes in an underwound state. Negative supercoiling favors strand separation, and DNA replication, transcription, recombination and repair, all of which involve strand separation. Also able to catalyze the interconversion of other topological isomers of dsDNA rings, including catenanes and knotted rings. Type II topoisomerases break and join 2 DNA strands simultaneously in an ATP-dependent manner. The polypeptide is DNA gyrase subunit A (Fibrobacter succinogenes (strain ATCC 19169 / S85)).